We begin with the raw amino-acid sequence, 301 residues long: Heterogeneous nuclear ribonucleoprotein D-like (301 aa).

The tract at residues 1–29 (MEDATEMSGGAEEFAEGSKINASKNQQDD) is disordered. RRM domains lie at 30-112 (GKMF…KGKE) and 115-194 (KKVF…QPKE). 2 disordered regions span residues 194-230 (EVYRQQQQQQKGGKSNASGGRGGGRGRGRGQGQNWNQ) and 269-301 (GYGPGYTDYSGQQSTYGKASRGGGNHQNNYQPY). Residues 212–224 (GGRGGGRGRGRGQ) show a composition bias toward gly residues.

The protein localises to the nucleus. Its subcellular location is the cytoplasm. Acts as a transcriptional regulator. Binds DNA and RNA. This Gallus gallus (Chicken) protein is Heterogeneous nuclear ribonucleoprotein D-like (HNRNPDL).